Consider the following 84-residue polypeptide: RNA-binding protein Hfq (84 aa).

The 60-residue stretch at 10–69 (EPFLNTLRREHVPVSIYLVNGIKLQGQIESFDQYVVLLRNTVTQMVFKHAISTIVPGRAV) folds into the Sm domain.

The protein belongs to the Hfq family. As to quaternary structure, homohexamer.

Its function is as follows. RNA chaperone that binds small regulatory RNA (sRNAs) and mRNAs to facilitate mRNA translational regulation in response to envelope stress, environmental stress and changes in metabolite concentrations. Also binds with high specificity to tRNAs. The sequence is that of RNA-binding protein Hfq from Verminephrobacter eiseniae (strain EF01-2).